We begin with the raw amino-acid sequence, 2359 residues long: Voltage-dependent T-type calcium channel subunit alpha-1H (2359 aa).

The disordered stretch occupies residues 1–63 (MTEGTLAADE…PGTECGADLG (63 aa)). The Cytoplasmic portion of the chain corresponds to 1 to 100 (MTEGTLAADE…SWCLRLVCNP (100 aa)). Residues 24–36 (APVRASPASPGAP) show a composition bias toward low complexity. An I repeat occupies 87–422 (TRPRSWCLRL…LCLVVIATQF (336 aa)). A helical membrane pass occupies residues 101–119 (WFEHISMLVIMLNCVTLGM). At 120-141 (FRPCEDVECRSERCSILEAFDD) the chain is on the extracellular side. Zn(2+) is bound at residue Asp140. The chain crosses the membrane as a helical span at residues 142 to 160 (FIFAFFAVEMVIKMVALGL). Topologically, residues 161–169 (FGQKCYLGD) are cytoplasmic. A helical transmembrane segment spans residues 170-184 (TWNRLDFFIVMAGMM). The Extracellular segment spans residues 185–193 (EYSLDGHNV). The Zn(2+) site is built by Asp189 and His191. Asn192 carries an N-linked (GlcNAc...) asparagine glycan. Residues 194-212 (SLSAIRTVRVLRPLRAINR) form a helical membrane-spanning segment. The Cytoplasmic portion of the chain corresponds to 213–232 (VPSMRILVTLLLDTLPMLGN). The chain crosses the membrane as a helical span at residues 233 to 253 (VLLLCFFVFFIFGIVGVQLWA). Topologically, residues 254 to 394 (GLLRNRCFLD…YYVMDAHSFY (141 aa)) are extracellular. Asn271 carries N-linked (GlcNAc...) asparagine glycosylation. A helical membrane pass occupies residues 395-419 (NFIYFILLIIMGSFFMINLCLVVIA). At 420 to 790 (TQFSETKQRE…GKLRRIVDSK (371 aa)) the chain is on the cytoplasmic side. Disordered stretches follow at residues 490–573 (VDPS…SESV), 620–656 (GTVN…SPRP), and 737–769 (GDCR…ASQP). Basic residues predominate over residues 503-532 (RRPRRAGRRTASVHHLVYHHHHHHHHHYHF). Over residues 557-566 (PPSPPSPGHG) the composition is skewed to pro residues. Positions 620 to 631 (GTVNSKGGTSSR) are enriched in polar residues. The II repeat unit spans residues 776–1015 (WASFSGKLRR…LLVAILVEGF (240 aa)). The chain crosses the membrane as a helical span at residues 791-811 (YFNRGIMAAILVNTLSMGVEY). At 812-824 (HEQPEELTNALEI) the chain is on the extracellular side. A helical membrane pass occupies residues 825–846 (SNIVFTSMFALEMLLKLLACGP). At 847-852 (LGYIRN) the chain is on the cytoplasmic side. The chain crosses the membrane as a helical span at residues 853–871 (PYNIFDGIVVVISVWEIVG). Residues 872–879 (QANGGLSV) lie on the Extracellular side of the membrane. A helical membrane pass occupies residues 880–903 (LRTFRLLRVLKLVRFLPALRRQLV). Over 904-914 (VLMRTMDNVAT) the chain is Cytoplasmic. A helical membrane pass occupies residues 915 to 935 (FCMLLMLFIFIFSILGMHLFG). At 936–987 (CKFSLKTDSGDTVPDRKNFDSLLWAIVTVFQILTQEDWNVVLYNGMASTSSW) the chain is on the extracellular side. Residues 988–1012 (AALYFVALMTFGNYVLFNLLVAILV) traverse the membrane as a helical segment. The Cytoplasmic segment spans residues 1013–1301 (EGFQAEGDAT…NRLRVSCQKV (289 aa)). The disordered stretch occupies residues 1061-1197 (GHLEGRGSLP…GASPGPRATP (137 aa)). Residues 1117–1126 (SLASLRSSPC) are compositionally biased toward polar residues. Residues 1130–1147 (GPNSAGSSRRSSWNSLGR) are compositionally biased toward low complexity. The stretch at 1292–1569 (NRLRVSCQKV…MFVGVVVENF (278 aa)) is one III repeat. Residues 1302-1324 (IAHKMFDHVVLVFIFLNCITIAL) form a helical membrane-spanning segment. Over 1325–1342 (ERPDIDPGSTERAFLSVS) the chain is Extracellular. The chain crosses the membrane as a helical span at residues 1343-1363 (NYIFTAIFVVEMMVKVVALGL). Residues 1364 to 1373 (LWGEHAYLQS) lie on the Cytoplasmic side of the membrane. The chain crosses the membrane as a helical span at residues 1374–1393 (SWNVLDGLLVLVSLVDIIVA). Topologically, residues 1394–1407 (MASAGGAKILGVLR) are extracellular. The helical transmembrane segment at 1408–1429 (VLRLLRTLRPLRVISRAPGLKL) threads the bilayer. Topologically, residues 1430-1439 (VVETLISSLR) are cytoplasmic. Residues 1440–1463 (PIGNIVLICCAFFIIFGILGVQLF) traverse the membrane as a helical segment. Residues 1464 to 1540 (KGKFYYCEGT…DQQPVQNHNP (77 aa)) lie on the Extracellular side of the membrane. N-linked (GlcNAc...) asparagine glycosylation is present at Asn1477. A helical membrane pass occupies residues 1541–1566 (WMLLYFISFLLIVSFFVLNMFVGVVV). The Cytoplasmic segment spans residues 1567-1621 (ENFHKCRQHQEAEEARRREEKRLRRLERRRRKAQRRPYYADYSHTRRSIHSLCTS). One copy of the IV repeat lies at 1607–1868 (DYSHTRRSIH…VVVAVLMKHL (262 aa)). The helical transmembrane segment at 1622–1642 (HYLDLFITFIICLNVITMSME) threads the bilayer. Residues 1643–1656 (HYNQPKSLDEALKY) are Extracellular-facing. A helical transmembrane segment spans residues 1657 to 1678 (CNYVFTIVFVFEAALKLVAFGF). Residues 1679 to 1685 (RRFFKDR) are Cytoplasmic-facing. Residues 1686 to 1704 (WNQLDLAIVLLSIMGIALE) traverse the membrane as a helical segment. Residues 1705 to 1718 (EIEMNAALPINPTI) lie on the Extracellular side of the membrane. A helical transmembrane segment spans residues 1719-1742 (IRIMRVLRIARVLKLLKMATGMRA). Topologically, residues 1743-1756 (LLDTVVQALPQVGN) are cytoplasmic. The helical transmembrane segment at 1757-1777 (LGLLFMLLFFIYAALGVELFG) threads the bilayer. The Extracellular segment spans residues 1778 to 1840 (RLECSEDNPC…KHCLSYLPAL (63 aa)). A helical membrane pass occupies residues 1841–1868 (SPVYFVTFMLVAQFVLVNVVVAVLMKHL). Over 1869–2359 (EESNKEARED…APDDSGDEPV (491 aa)) the chain is Cytoplasmic. The segment covering 1891-1911 (QGSTAQPPPTAQESQGTQPDT) has biased composition (polar residues). Disordered stretches follow at residues 1891–1913 (QGST…DTPN), 1974–2003 (SFQV…PRSL), 2016–2258 (HSES…GERW), and 2335–2359 (PQTP…DEPV). Residues 2016–2026 (HSESLEGKVDD) are compositionally biased toward basic and acidic residues. Over residues 2086–2096 (DEAEAADPADE) the composition is skewed to acidic residues. Positions 2166-2181 (GESHLESGEVRGRASE) are enriched in basic and acidic residues.

It belongs to the calcium channel alpha-1 subunit (TC 1.A.1.11) family. CACNA1H subfamily. As to quaternary structure, interacts (via N-terminal cytoplasmic domain) with STAC. In terms of processing, in response to raising of intracellular calcium, the T-type channels are activated by CaM-kinase II. As to expression, expressed in brain.

The protein resides in the cell membrane. The enzyme catalyses Ca(2+)(in) = Ca(2+)(out). Its function is as follows. Voltage-sensitive calcium channel that gives rise to T-type calcium currents. T-type calcium channels belong to the 'low-voltage activated (LVA)' group. A particularity of this type of channel is an opening at quite negative potentials, and a voltage-dependent inactivation. T-type channels serve pacemaking functions in both central neurons and cardiac nodal cells and support calcium signaling in secretory cells and vascular smooth muscle. They may also be involved in the modulation of firing patterns of neurons. In the adrenal zona glomerulosa, participates in the signaling pathway leading to aldosterone production in response to either AGT/angiotensin II, or hyperkalemia. This is Voltage-dependent T-type calcium channel subunit alpha-1H (Cacna1h) from Rattus norvegicus (Rat).